A 185-amino-acid polypeptide reads, in one-letter code: Ribosome-recycling factor (185 aa).

It belongs to the RRF family.

Its subcellular location is the cytoplasm. Functionally, responsible for the release of ribosomes from messenger RNA at the termination of protein biosynthesis. May increase the efficiency of translation by recycling ribosomes from one round of translation to another. The sequence is that of Ribosome-recycling factor from Wolbachia pipientis subsp. Culex pipiens (strain wPip).